The primary structure comprises 532 residues: Cyclin-L1 (532 aa).

Cyclin-like regions lie at residues 94–196 (ELIQ…RVLK) and 209–293 (KIIV…ETLR). T331 carries the phosphothreonine modification. The tract at residues 332–532 (PALSTLGGFS…SRSGHGRHRR (201 aa)) is disordered. 2 positions are modified to phosphoserine: S341 and S344. Residues K345 and K353 each participate in a glycyl lysine isopeptide (Lys-Gly) (interchain with G-Cter in SUMO2) cross-link. Positions 348–358 (SPREVKAEEKS) are enriched in basic and acidic residues. Phosphoserine is present on residues S358 and S361. Basic and acidic residues predominate over residues 367–376 (VKKEPEDRQQ). K368 is covalently cross-linked (Glycyl lysine isopeptide (Lys-Gly) (interchain with G-Cter in SUMO2)). S380 bears the Phosphoserine mark. Composition is skewed to basic residues over residues 388–424 (DSKRSRTSRSASRSRSRTRSRSRSHSPRRHYNNRRSR), 444–458 (RRHHNHGSPHLKAKH), 466–482 (SNRHGHKRKKSRSRSQS), and 492–504 (KKHRHERGHHRDR). Residues 396–438 (RSASRSRSRTRSRSRSHSPRRHYNNRRSRSGTYSSRSRSRSRS) form an RS region. S451 carries the phosphoserine modification. A compositionally biased stretch (basic and acidic residues) spans 505-514 (RERSRSFERS). Over residues 515–532 (HKGKHHGGSRSGHGRHRR) the composition is skewed to basic residues.

This sequence belongs to the cyclin family. Cyclin L subfamily. Interacts with POLR2A via its hyperphosphorylated C-terminal domain (CTD). Interacts with CDK11A, CDK11B, CDK12 and CDK13. May form a ternary complex with CDK11B and casein kinase II (CKII). Interacts with pre-mRNA-splicing factors, including at least SRSF1, SRSF2 and SRSF7/SLU7. In terms of tissue distribution, widely expressed (at protein level).

The protein resides in the nucleus speckle. Its subcellular location is the nucleus. The protein localises to the nucleoplasm. It localises to the cytoplasm. Involved in pre-mRNA splicing. Functions in association with cyclin-dependent kinases (CDKs). May play a role in the regulation of RNA polymerase II (pol II). Inhibited by the CDK-specific inhibitor CDKN1A/p21. In Mus musculus (Mouse), this protein is Cyclin-L1 (Ccnl1).